The primary structure comprises 228 residues: FtsZ-localized protein A (228 aa).

One can recognise a GST N-terminal domain in the interval 3 to 85; that stretch reads VERTLHHFPL…HIEETETEPP (83 aa). The GST C-terminal domain occupies 90–223; that stretch reads DPAERAEARR…WPGLAPAAHY (134 aa).

It belongs to the GST superfamily. Homodimer. Interacts with FtsZ filaments. Probably interacts with the GTPase domain of FtsZ.

Its subcellular location is the cytoplasm. Its function is as follows. Essential cell division protein that must bind to FtsZ for division to occur. Critical coordinator of envelope constriction through its interaction with FtsZ. Promotes the formation of highly curved FtsZ filaments, reduces the GTPase activity of FtsZ and stabilizes FtsZ polymers. May regulate FtsZ function by modulating its superstructure. Does not bind to glutathione. This Caulobacter vibrioides (strain NA1000 / CB15N) (Caulobacter crescentus) protein is FtsZ-localized protein A.